Here is a 1179-residue protein sequence, read N- to C-terminus: DNA-directed RNA polymerase subunit beta' (1179 aa).

Zn(2+)-binding residues include cysteine 60, cysteine 62, cysteine 75, and cysteine 78. The Mg(2+) site is built by aspartate 449, aspartate 451, and aspartate 453. Zn(2+) is bound by residues cysteine 796, cysteine 871, cysteine 878, and cysteine 881.

Belongs to the RNA polymerase beta' chain family. In terms of assembly, the RNAP catalytic core consists of 2 alpha, 1 beta, 1 beta' and 1 omega subunit. When a sigma factor is associated with the core the holoenzyme is formed, which can initiate transcription. Mg(2+) is required as a cofactor. It depends on Zn(2+) as a cofactor.

The catalysed reaction is RNA(n) + a ribonucleoside 5'-triphosphate = RNA(n+1) + diphosphate. Functionally, DNA-dependent RNA polymerase catalyzes the transcription of DNA into RNA using the four ribonucleoside triphosphates as substrates. The protein is DNA-directed RNA polymerase subunit beta' of Symbiobacterium thermophilum (strain DSM 24528 / JCM 14929 / IAM 14863 / T).